Consider the following 287-residue polypeptide: Cbb3-type cytochrome c oxidase subunit FixPc (287 aa).

Over 1-36 (MSEKHIDEFSGVETTGHEWDGIRELNNPMPRWWVWT) the chain is Cytoplasmic. Residues 37-57 (FYATIVWALGYAIAYPAIPMI) form a helical membrane-spanning segment. Residues 58–287 (TDATKGMLGF…IFVHSLGGGT (230 aa)) lie on the Periplasmic side of the membrane. Cytochrome c domains are found at residues 108–196 (FAIA…WGLT) and 203–284 (GLAE…HSLG). Heme c is bound by residues C121, C124, H125, M173, C216, C219, H220, and M261.

Belongs to the CcoP / FixP family. In terms of assembly, component of the cbb3-type cytochrome c oxidase at least composed of FixN, FixO, FixQ and FixP. Heme c is required as a cofactor.

It is found in the cell inner membrane. It functions in the pathway energy metabolism; oxidative phosphorylation. In terms of biological role, C-type cytochrome. Part of the cbb3-type cytochrome c oxidase complex. FixP subunit is required for transferring electrons from donor cytochrome c via its heme groups to FixO subunit. From there, electrons are shuttled to the catalytic binuclear center of FixN subunit where oxygen reduction takes place. The complex also functions as a proton pump. This Rhizobium leguminosarum bv. viciae protein is Cbb3-type cytochrome c oxidase subunit FixPc.